Here is a 333-residue protein sequence, read N- to C-terminus: Holliday junction branch migration complex subunit RuvB (333 aa).

Residues Met1 to Tyr182 form a large ATPase domain (RuvB-L) region. Residues Leu21, Arg22, Gly63, Lys66, Thr67, Thr68, Glu129–Tyr131, Arg172, Tyr182, and Arg219 contribute to the ATP site. Residue Thr67 participates in Mg(2+) binding. Residues Gln183 to Gln253 are small ATPAse domain (RuvB-S). The segment at Arg256–Arg333 is head domain (RuvB-H). 2 residues coordinate DNA: Arg311 and Arg316.

This sequence belongs to the RuvB family. As to quaternary structure, homohexamer. Forms an RuvA(8)-RuvB(12)-Holliday junction (HJ) complex. HJ DNA is sandwiched between 2 RuvA tetramers; dsDNA enters through RuvA and exits via RuvB. An RuvB hexamer assembles on each DNA strand where it exits the tetramer. Each RuvB hexamer is contacted by two RuvA subunits (via domain III) on 2 adjacent RuvB subunits; this complex drives branch migration. In the full resolvosome a probable DNA-RuvA(4)-RuvB(12)-RuvC(2) complex forms which resolves the HJ.

The protein localises to the cytoplasm. The enzyme catalyses ATP + H2O = ADP + phosphate + H(+). Functionally, the RuvA-RuvB-RuvC complex processes Holliday junction (HJ) DNA during genetic recombination and DNA repair, while the RuvA-RuvB complex plays an important role in the rescue of blocked DNA replication forks via replication fork reversal (RFR). RuvA specifically binds to HJ cruciform DNA, conferring on it an open structure. The RuvB hexamer acts as an ATP-dependent pump, pulling dsDNA into and through the RuvAB complex. RuvB forms 2 homohexamers on either side of HJ DNA bound by 1 or 2 RuvA tetramers; 4 subunits per hexamer contact DNA at a time. Coordinated motions by a converter formed by DNA-disengaged RuvB subunits stimulates ATP hydrolysis and nucleotide exchange. Immobilization of the converter enables RuvB to convert the ATP-contained energy into a lever motion, pulling 2 nucleotides of DNA out of the RuvA tetramer per ATP hydrolyzed, thus driving DNA branch migration. The RuvB motors rotate together with the DNA substrate, which together with the progressing nucleotide cycle form the mechanistic basis for DNA recombination by continuous HJ branch migration. Branch migration allows RuvC to scan DNA until it finds its consensus sequence, where it cleaves and resolves cruciform DNA. In Geobacillus thermodenitrificans (strain NG80-2), this protein is Holliday junction branch migration complex subunit RuvB.